The primary structure comprises 1081 residues: Cellulose synthase A catalytic subunit 1 [UDP-forming] (1081 aa).

Methionine 1 is modified (N-acetylmethionine). At 1-270 (MEASAGLVAG…SRVVPIPSSR (270 aa)) the chain is on the cytoplasmic side. Residues cysteine 39, cysteine 42, cysteine 58, cysteine 61, cysteine 66, cysteine 69, cysteine 81, and cysteine 84 each coordinate Zn(2+). The RING-type; degenerate zinc finger occupies 39–85 (CQICGDDVGLAETGDVFVACNECAFPVCRPCYEYERKDGTQCCPQCK). Residues 118–195 (GANKARHQRH…RQPVPVRIVD (78 aa)) are disordered. A compositionally biased stretch (basic and acidic residues) spans 127-139 (HGEEFSSSSRHES). The segment covering 158 to 168 (PDTQSVRTTSG) has biased composition (polar residues). Residues 271–291 (LTPYRVVIILRLIILCFFLQY) traverse the membrane as a helical segment. At 292–299 (RTTHPVKN) the chain is on the extracellular side. The helical transmembrane segment at 300–320 (AYPLWLTSVICEIWFAFSWLL) threads the bilayer. Over 321–856 (DQFPKWYPIN…LLERIAYINT (536 aa)) the chain is Cytoplasmic. UDP-alpha-D-glucose is bound by residues serine 359, lysine 365, glutamate 366, and aspartate 395. Aspartate 395 is a catalytic residue. Positions 449-476 (VKERRAMKREYEEFKVRINALVAKAQKI) form a coiled coil. Lysine 536 contributes to the UDP-alpha-D-glucose binding site. Lysine 537 and aspartate 561 together coordinate Mn(2+). Residue aspartate 780 is part of the active site. The helical transmembrane segment at 857–877 (IVYPITSIPLIAYCILPAFCL) threads the bilayer. Over 878–889 (ITDRFIIPEISN) the chain is Extracellular. The chain crosses the membrane as a helical span at residues 890–910 (YASIWFILLFISIAVTGILEL). The Cytoplasmic segment spans residues 911 to 925 (RWSGVSIEDWWRNEQ). A helical transmembrane segment spans residues 926 to 946 (FWVIGGTSAHLFAVFQGLLKV). Over 947-976 (LAGIDTNFTVTSKATDEDGDFAELYIFKWT) the chain is Extracellular. The N-linked (GlcNAc...) asparagine glycan is linked to asparagine 953. The helical transmembrane segment at 977–997 (ALLIPPTTVLLVNLIGIVAGV) threads the bilayer. Topologically, residues 998-1008 (SYAVNSGYQSW) are cytoplasmic. Residues 1009 to 1029 (GPLFGKLFFALWVIAHLYPFL) traverse the membrane as a helical segment. Over 1030–1038 (KGLLGRQNR) the chain is Extracellular. The chain crosses the membrane as a helical span at residues 1039 to 1059 (TPTIVIVWSVLLASIFSLLWV). At 1060–1081 (RINPFVDANPNANNFNGKGGVF) the chain is on the cytoplasmic side.

The protein belongs to the glycosyltransferase 2 family. Plant cellulose synthase subfamily. In terms of assembly, interacts with CESA3 and CESA6. Assembly with CESA3 and CESA6 is required for functional complex in primary cell wall cellulose synthesis. Interacts with STL1 and STL2, but not with GOT1. Binds to CSI1. Interacts with PAT24/TIP1. The cofactor is Zn(2+). Requires Mn(2+) as cofactor. In terms of processing, S-acylated. Expressed in germinating seeds, seedlings, roots, stems, shoots leaves and flowers, but not in mature flowers.

It is found in the cell membrane. It catalyses the reaction [(1-&gt;4)-beta-D-glucosyl](n) + UDP-alpha-D-glucose = [(1-&gt;4)-beta-D-glucosyl](n+1) + UDP + H(+). The protein operates within glycan metabolism; plant cellulose biosynthesis. Functionally, catalytic subunit of cellulose synthase terminal complexes ('rosettes'), required for beta-1,4-glucan microfibril crystallization, a major mechanism of the cell wall formation. Involved in the primary cell wall formation. Required during embryogenesis for cell elongation, orientation of cell expansion and complex cell wall formations, such as interdigitated pattern of epidermal pavement cells, stomatal guard cells and trichomes. Plays a role in lateral roots formation, but seems not necessary for the development of tip-growing cells such as root hairs. The presence of each protein CESA1 and CESA6 is critical for cell expansion after germination. In Arabidopsis thaliana (Mouse-ear cress), this protein is Cellulose synthase A catalytic subunit 1 [UDP-forming].